The chain runs to 464 residues: Kynureninase (464 aa).

Position 1 is an N-acetylmethionine (methionine 1). Pyridoxal 5'-phosphate-binding positions include leucine 137, threonine 138, 165 to 168 (FPSD), serine 221, aspartate 250, histidine 253, and tyrosine 275. Lysine 276 is modified (N6-(pyridoxal phosphate)lysine). The pyridoxal 5'-phosphate site is built by tryptophan 305 and asparagine 333.

It belongs to the kynureninase family. Homodimer. It depends on pyridoxal 5'-phosphate as a cofactor.

The protein resides in the cytoplasm. Its subcellular location is the cytosol. It catalyses the reaction L-kynurenine + H2O = anthranilate + L-alanine + H(+). The enzyme catalyses 3-hydroxy-L-kynurenine + H2O = 3-hydroxyanthranilate + L-alanine + H(+). The protein operates within amino-acid degradation; L-kynurenine degradation; L-alanine and anthranilate from L-kynurenine: step 1/1. It participates in cofactor biosynthesis; NAD(+) biosynthesis; quinolinate from L-kynurenine: step 2/3. In terms of biological role, catalyzes the cleavage of L-kynurenine (L-Kyn) and L-3-hydroxykynurenine (L-3OHKyn) into anthranilic acid (AA) and 3-hydroxyanthranilic acid (3-OHAA), respectively. Has a preference for the L-3-hydroxy form. Also has cysteine-conjugate-beta-lyase activity. This chain is Kynureninase (Kynu), found in Mus musculus (Mouse).